The following is a 307-amino-acid chain: uncharacterized protein (307 aa).

The region spanning 54-307 (RHYLSTSMRV…KALPVDFFRE (254 aa)) is the EAL domain. 2 helical membrane-spanning segments follow: residues 158 to 178 (PGFL…AHAL) and 203 to 223 (ALGV…LAYL).

The protein localises to the cell membrane. This is an uncharacterized protein from Mycobacterium tuberculosis (strain CDC 1551 / Oshkosh).